Here is a 160-residue protein sequence, read N- to C-terminus: Protein-export protein SecB (160 aa).

The protein belongs to the SecB family. As to quaternary structure, homotetramer, a dimer of dimers. One homotetramer interacts with 1 SecA dimer.

It is found in the cytoplasm. One of the proteins required for the normal export of preproteins out of the cell cytoplasm. It is a molecular chaperone that binds to a subset of precursor proteins, maintaining them in a translocation-competent state. It also specifically binds to its receptor SecA. This Nitrosomonas eutropha (strain DSM 101675 / C91 / Nm57) protein is Protein-export protein SecB.